The chain runs to 252 residues: Neurotrophic factor BDNF precursor form (252 aa).

A signal peptide spans 1–18; the sequence is MTILFLTMVISYFGCMKA. Residues 19 to 133 constitute a propeptide that is removed on maturation; the sequence is APMKEANVRG…AANMSMRVRR (115 aa). The interval 43-62 is disordered; the sequence is LESVNGPKAGSRGLTSSSSS. Asn-126 is a glycosylation site (N-linked (GlcNAc...) asparagine). Cystine bridges form between Cys-146-Cys-213, Cys-191-Cys-242, and Cys-201-Cys-244.

This sequence belongs to the NGF-beta family. As to quaternary structure, monomers and homodimers. Binds to NTRK2/TRKB. Can form heterodimers with other neurotrophin family members, such as NTF3 and NTF4 (in vitro), but the physiological relevance of this is not clear. BDNF precursor form: interacts with the heterodimer formed by NGFR and SORCS2. Mature BDNF has much lower affinity for the heterodimer formed by NGFR and SORCS2. Post-translationally, N-glycosylated and glycosulfated, contrary to mature BDNF. Mature BDNF is produced by proteolytic removal of the propeptide, catalyzed by a FURIN family member. In addition, the precursor form is proteolytically cleaved within the propeptide, but this is not an obligatory intermediate for the production of mature BDNF. Can be converted into mature BDNF by plasmin (PLG). In terms of tissue distribution, brain and central nervous system.

The protein localises to the secreted. Important signaling molecule that activates signaling cascades downstream of NTRK2. During development, promotes the survival and differentiation of selected neuronal populations of the peripheral and central nervous systems. Participates in axonal growth, pathfinding and in the modulation of dendritic growth and morphology. Major regulator of synaptic transmission and plasticity at adult synapses in many regions of the CNS. The versatility of BDNF is emphasized by its contribution to a range of adaptive neuronal responses including long-term potentiation (LTP), long-term depression (LTD), certain forms of short-term synaptic plasticity, as well as homeostatic regulation of intrinsic neuronal excitability. In terms of biological role, important signaling molecule that activates signaling cascades downstream of NTRK2. Activates signaling cascades via the heterodimeric receptor formed by NGFR and SORCS2. Signaling via NGFR and SORCS2 plays a role in synaptic plasticity and long-term depression (LTD). Binding to NGFR and SORCS2 promotes neuronal apoptosis. Promotes neuronal growth cone collapse. This Sus scrofa (Pig) protein is Neurotrophic factor BDNF precursor form (BDNF).